Reading from the N-terminus, the 210-residue chain is Leucyl/phenylalanyl-tRNA--protein transferase (210 aa).

The protein belongs to the L/F-transferase family.

The protein resides in the cytoplasm. It carries out the reaction N-terminal L-lysyl-[protein] + L-leucyl-tRNA(Leu) = N-terminal L-leucyl-L-lysyl-[protein] + tRNA(Leu) + H(+). It catalyses the reaction N-terminal L-arginyl-[protein] + L-leucyl-tRNA(Leu) = N-terminal L-leucyl-L-arginyl-[protein] + tRNA(Leu) + H(+). The catalysed reaction is L-phenylalanyl-tRNA(Phe) + an N-terminal L-alpha-aminoacyl-[protein] = an N-terminal L-phenylalanyl-L-alpha-aminoacyl-[protein] + tRNA(Phe). Its function is as follows. Functions in the N-end rule pathway of protein degradation where it conjugates Leu, Phe and, less efficiently, Met from aminoacyl-tRNAs to the N-termini of proteins containing an N-terminal arginine or lysine. The polypeptide is Leucyl/phenylalanyl-tRNA--protein transferase (Ruegeria sp. (strain TM1040) (Silicibacter sp.)).